A 291-amino-acid polypeptide reads, in one-letter code: Elongation factor Ts (291 aa).

An involved in Mg(2+) ion dislocation from EF-Tu region spans residues 79–82; that stretch reads TDFV.

This sequence belongs to the EF-Ts family.

The protein localises to the cytoplasm. Its function is as follows. Associates with the EF-Tu.GDP complex and induces the exchange of GDP to GTP. It remains bound to the aminoacyl-tRNA.EF-Tu.GTP complex up to the GTP hydrolysis stage on the ribosome. In Dinoroseobacter shibae (strain DSM 16493 / NCIMB 14021 / DFL 12), this protein is Elongation factor Ts.